The following is a 98-amino-acid chain: NADH-ubiquinone oxidoreductase chain 4L (98 aa).

The next 3 helical transmembrane spans lie at 1–21 (MSMVYFNIFMAFTVSFVGLLM), 29–49 (SLLCLEGMMLSLFVMMSMTIL), and 61–81 (IILLVFAACEAALGLSLLVMV).

This sequence belongs to the complex I subunit 4L family. In terms of assembly, core subunit of respiratory chain NADH dehydrogenase (Complex I) which is composed of 45 different subunits.

It is found in the mitochondrion inner membrane. It catalyses the reaction a ubiquinone + NADH + 5 H(+)(in) = a ubiquinol + NAD(+) + 4 H(+)(out). Its function is as follows. Core subunit of the mitochondrial membrane respiratory chain NADH dehydrogenase (Complex I) which catalyzes electron transfer from NADH through the respiratory chain, using ubiquinone as an electron acceptor. Part of the enzyme membrane arm which is embedded in the lipid bilayer and involved in proton translocation. This Phocarctos hookeri (Hooker's sea lion) protein is NADH-ubiquinone oxidoreductase chain 4L (MT-ND4L).